Consider the following 200-residue polypeptide: Endoribonuclease YbeY (200 aa).

Pro residues predominate over residues 1 to 18; sequence MPADPALPDPVPPGPTAP. The tract at residues 1 to 22 is disordered; that stretch reads MPADPALPDPVPPGPTAPVPTD. Positions 151, 155, and 161 each coordinate Zn(2+).

This sequence belongs to the endoribonuclease YbeY family. Zn(2+) serves as cofactor.

The protein localises to the cytoplasm. In terms of biological role, single strand-specific metallo-endoribonuclease involved in late-stage 70S ribosome quality control and in maturation of the 3' terminus of the 16S rRNA. In Rhodospirillum rubrum (strain ATCC 11170 / ATH 1.1.1 / DSM 467 / LMG 4362 / NCIMB 8255 / S1), this protein is Endoribonuclease YbeY.